The sequence spans 214 residues: Putative AgrB-like protein 2 (214 aa).

Helical transmembrane passes span 41 to 61 (IISVLILGLVFNIALEALIFL), 83 to 103 (TLLGIIISICIGFLIKSSFFA), 109 to 129 (LVVFIGIVIFVFGYFIVFKFA), 154 to 174 (ILTIYLFIEVLSIILYYNSGW), and 179 to 199 (PVMLSIIFGVAWQCMTLTYIG).

Belongs to the AgrB family.

Its subcellular location is the cell membrane. In terms of biological role, may be involved in the proteolytic processing of a quorum sensing system signal molecule precursor. The chain is Putative AgrB-like protein 2 from Clostridium perfringens (strain 13 / Type A).